Reading from the N-terminus, the 394-residue chain is HORMA domain-containing protein 1 (394 aa).

Residues 24–226 form the HORMA domain; it reads QQSLVLVKRL…TPFHTFKVKV (203 aa). The segment at 306 to 394 is disordered; sequence KESPELSISH…RKFSEPKEHI (89 aa). A compositionally biased stretch (polar residues) spans 311 to 325; it reads LSISHSQVEQLVSKT. The segment covering 353–362 has biased composition (basic and acidic residues); that stretch reads KSKESRKRSQ. Position 376 is a phosphoserine (Ser-376). The Nuclear localization signal signature appears at 383 to 386; the sequence is KRRK.

In terms of assembly, interacts with HORMAD2. Interacts with IHO1. Post-translationally, phosphorylated at Ser-377 in a SPO11-dependent manner.

The protein localises to the nucleus. Its subcellular location is the chromosome. Functionally, plays a key role in meiotic progression. Regulates 3 different functions during meiosis: ensures that sufficient numbers of processed DNA double-strand breaks (DSBs) are available for successful homology search by increasing the steady-state numbers of single-stranded DSB ends. Promotes synaptonemal-complex formation independently of its role in homology search. Plays a key role in the male mid-pachytene checkpoint and the female meiotic prophase checkpoint: required for efficient build-up of ATR activity on unsynapsed chromosome regions, a process believed to form the basis of meiotic silencing of unsynapsed chromatin (MSUC) and meiotic prophase quality control in both sexes. This chain is HORMA domain-containing protein 1 (HORMAD1), found in Sus scrofa (Pig).